Here is a 378-residue protein sequence, read N- to C-terminus: Putative glutamate--cysteine ligase 2 (378 aa).

This sequence belongs to the glutamate--cysteine ligase type 2 family. YbdK subfamily.

The catalysed reaction is L-cysteine + L-glutamate + ATP = gamma-L-glutamyl-L-cysteine + ADP + phosphate + H(+). Functionally, ATP-dependent carboxylate-amine ligase which exhibits weak glutamate--cysteine ligase activity. In Ectopseudomonas mendocina (strain ymp) (Pseudomonas mendocina), this protein is Putative glutamate--cysteine ligase 2.